A 249-amino-acid chain; its full sequence is Probable transcriptional regulatory protein AB57_1731 (249 aa).

Belongs to the TACO1 family.

It localises to the cytoplasm. The protein is Probable transcriptional regulatory protein AB57_1731 of Acinetobacter baumannii (strain AB0057).